Reading from the N-terminus, the 193-residue chain is MKIGLYFGTFNPIHIGHLIIANHMAENSDLDQVWMVVTPHNPLKKKDTLLDDYQRLHLVNLATEDYPKLKPSDIEFKLPQPNYTVNTLAHLQDKFPSYEFSLIMGEDNLNSLHKWKNYEAILQNHQIYVYPRLNTDTIDNQFINHQKIHIIKAPIVEISSTFIRENIKNKKNIQPLLPPKVWKYIDHSNFYKK.

It belongs to the NadD family.

The enzyme catalyses nicotinate beta-D-ribonucleotide + ATP + H(+) = deamido-NAD(+) + diphosphate. It functions in the pathway cofactor biosynthesis; NAD(+) biosynthesis; deamido-NAD(+) from nicotinate D-ribonucleotide: step 1/1. In terms of biological role, catalyzes the reversible adenylation of nicotinate mononucleotide (NaMN) to nicotinic acid adenine dinucleotide (NaAD). The protein is Probable nicotinate-nucleotide adenylyltransferase of Flavobacterium psychrophilum (strain ATCC 49511 / DSM 21280 / CIP 103535 / JIP02/86).